Consider the following 231-residue polypeptide: MFTNPIICALDTHDINHALLLTKMLYGRVSMVKLGLEFFTAYGLSGVQAIADCGVPIFLDLKLHDIPNTVSKAISVIASLNVAMLTIHVSGGREMMIRAMDSISGSVTKLVGVTVLTSMDDSDLKEIGVNESPVQQVMLLSKLAREVGLYGIVCSAFEAKEVRNRYTEKDLKLIVPGIRFDSDCNDQKRVKSPKDAMLAGANYLVIGRPITMSSDPVQTVEDILLSISKCI.

Substrate is bound by residues aspartate 11, lysine 33, 60–69, threonine 117, arginine 179, glutamine 187, glycine 207, and arginine 208; that span reads DLKLHDIPNT. The Proton donor role is filled by lysine 62.

It belongs to the OMP decarboxylase family. Type 1 subfamily. Homodimer.

It carries out the reaction orotidine 5'-phosphate + H(+) = UMP + CO2. Its pathway is pyrimidine metabolism; UMP biosynthesis via de novo pathway; UMP from orotate: step 2/2. In terms of biological role, catalyzes the decarboxylation of orotidine 5'-monophosphate (OMP) to uridine 5'-monophosphate (UMP). The polypeptide is Orotidine 5'-phosphate decarboxylase (Ehrlichia chaffeensis (strain ATCC CRL-10679 / Arkansas)).